We begin with the raw amino-acid sequence, 107 residues long: Keratin, type I cytoskeletal 20 (107 aa).

Residues 1–7 (GNLWVGN) are head. The segment at 8-43 (EKMTMKNLNDRLASYLEKVRSLEQSNSKFELQIKQW) is coil 1A. One can recognise an IF rod domain in the interval 8–107 (EKMTMKNLND…ETERGIRLAV (100 aa)). The linker 1 stretch occupies residues 44 to 61 (YESNTPGISRDHSAYLQQ). Residues 62 to 107 (IQDLRNQIRDAQLQNARCVLQIDNAKLAAEDFRLKYETERGIRLAV) are coil 1B.

This sequence belongs to the intermediate filament family. As to quaternary structure, heterotetramer of two type I and two type II keratins. Associates with KRT8.

Functionally, plays a significant role in maintaining keratin filament organization in intestinal epithelia. When phosphorylated, plays a role in the secretion of mucin in the small intestine. In Sus scrofa (Pig), this protein is Keratin, type I cytoskeletal 20.